A 260-amino-acid chain; its full sequence is Universal stress protein PHOS34 (260 aa).

A chloroplast-targeting transit peptide spans 1-33; the sequence is MNPDSDYPHLPNIKIHHPSSPRHSHHHSSSTPS. The disordered stretch occupies residues 1–42; it reads MNPDSDYPHLPNIKIHHPSSPRHSHHHSSSTPSAATPTPTAG. The segment covering 14–28 has biased composition (basic residues); sequence KIHHPSSPRHSHHHS. An ATP-binding site is contributed by proline 18. Serine 20 carries the phosphoserine; by MAPK3 and MAPK6 modification. The span at 29-41 shows a compositional bias: low complexity; that stretch reads SSTPSAATPTPTA. ATP is bound at residue valine 80. The disordered stretch occupies residues 92–118; that stretch reads GPLPLQTPPPPSAATDPGAQPKPSQED. ATP contacts are provided by residues 170–179 and 187–189; these read GSRGFGAEKR and SVS. Positions 209–260 are disordered; the sequence is RDGPAPPGNVGATREAIVTVKSRRDDDDDDDEDHEAKIAAAASDHHEHIKDE. Serine 230 carries the post-translational modification Phosphoserine. The span at 251–260 shows a compositional bias: basic and acidic residues; the sequence is SDHHEHIKDE.

It belongs to the universal stress protein A family. In terms of processing, phosphorylated by MAPK3 and MAPK6 after pathogenic elicitation (e.g. bacterial flg22, Phytophthora infestans zoospores and xylanase).

It is found in the plastid. Its subcellular location is the chloroplast. This is Universal stress protein PHOS34 from Arabidopsis thaliana (Mouse-ear cress).